The following is a 475-amino-acid chain: Ribulose bisphosphate carboxylase large chain (475 aa).

Positions 1 to 2 are excised as a propeptide; it reads MS. At P3 the chain carries N-acetylproline. An N6,N6,N6-trimethyllysine modification is found at K14. Substrate contacts are provided by N123 and T173. K175 (proton acceptor) is an active-site residue. K177 provides a ligand contact to substrate. Residues K201, D203, and E204 each coordinate Mg(2+). K201 carries the post-translational modification N6-carboxylysine. H294 functions as the Proton acceptor in the catalytic mechanism. Residues R295, H327, and S379 each contribute to the substrate site.

The protein belongs to the RuBisCO large chain family. Type I subfamily. As to quaternary structure, heterohexadecamer of 8 large chains and 8 small chains; disulfide-linked. The disulfide link is formed within the large subunit homodimers. Requires Mg(2+) as cofactor. In terms of processing, the disulfide bond which can form in the large chain dimeric partners within the hexadecamer appears to be associated with oxidative stress and protein turnover.

The protein localises to the plastid. It is found in the chloroplast. It catalyses the reaction 2 (2R)-3-phosphoglycerate + 2 H(+) = D-ribulose 1,5-bisphosphate + CO2 + H2O. The catalysed reaction is D-ribulose 1,5-bisphosphate + O2 = 2-phosphoglycolate + (2R)-3-phosphoglycerate + 2 H(+). Functionally, ruBisCO catalyzes two reactions: the carboxylation of D-ribulose 1,5-bisphosphate, the primary event in carbon dioxide fixation, as well as the oxidative fragmentation of the pentose substrate in the photorespiration process. Both reactions occur simultaneously and in competition at the same active site. The protein is Ribulose bisphosphate carboxylase large chain of Picea sitchensis (Sitka spruce).